Here is a 46-residue protein sequence, read N- to C-terminus: Diuretic hormone (46 aa).

Position 46 is an isoleucine amide (Ile46).

This sequence belongs to the sauvagine/corticotropin-releasing factor/urotensin I family.

The protein resides in the secreted. Functionally, regulation of fluid secretion. Stimulates primary urine secretion by Malpighian tubules and causes a dose-dependent stimulation of cAMP levels in the tubules. In Locusta migratoria (Migratory locust), this protein is Diuretic hormone.